A 388-amino-acid chain; its full sequence is Pepsin A (388 aa).

A signal peptide spans 1–15 (MKWLLLLGLVALSEC). A propeptide spans 16-62 (IIYKVPLVRKKSLRRNLSEHGLLKDFLKKHNRNPASKYFPQTEAPTL) (activation peptide). Residues 76–385 (YFGTIGIGTP…DRANNQVGLA (310 aa)) enclose the Peptidase A1 domain. Asp-94 is an active-site residue. Cys-107 and Cys-112 are oxidised to a cystine. A Phosphoserine modification is found at Ser-130. A disulfide bridge connects residues Cys-268 and Cys-272. Asp-277 is an active-site residue. A disulfide bridge links Cys-311 with Cys-344.

The protein belongs to the peptidase A1 family.

It is found in the secreted. It catalyses the reaction Preferential cleavage: hydrophobic, preferably aromatic, residues in P1 and P1' positions. Cleaves 1-Phe-|-Val-2, 4-Gln-|-His-5, 13-Glu-|-Ala-14, 14-Ala-|-Leu-15, 15-Leu-|-Tyr-16, 16-Tyr-|-Leu-17, 23-Gly-|-Phe-24, 24-Phe-|-Phe-25 and 25-Phe-|-Tyr-26 bonds in the B chain of insulin.. Shows particularly broad specificity; although bonds involving phenylalanine and leucine are preferred, many others are also cleaved to some extent. The chain is Pepsin A (PGA) from Macaca mulatta (Rhesus macaque).